Reading from the N-terminus, the 295-residue chain is UDP-N-acetylenolpyruvoylglucosamine reductase (295 aa).

One can recognise an FAD-binding PCMH-type domain in the interval 23 to 188 (KVGGPADFLA…ISAKFALKPG (166 aa)). Arg167 is a catalytic residue. Residue Ser217 is the Proton donor of the active site. Residue Glu287 is part of the active site.

It belongs to the MurB family. FAD serves as cofactor.

It localises to the cytoplasm. The catalysed reaction is UDP-N-acetyl-alpha-D-muramate + NADP(+) = UDP-N-acetyl-3-O-(1-carboxyvinyl)-alpha-D-glucosamine + NADPH + H(+). Its pathway is cell wall biogenesis; peptidoglycan biosynthesis. Functionally, cell wall formation. The sequence is that of UDP-N-acetylenolpyruvoylglucosamine reductase from Streptococcus pyogenes serotype M12 (strain MGAS9429).